We begin with the raw amino-acid sequence, 211 residues long: Ion-translocating oxidoreductase complex subunit G (211 aa).

Residues 9-29 (GLTLAIFACATTGLVALTQYL) form a helical membrane-spanning segment. Thr175 carries the post-translational modification FMN phosphoryl threonine.

It belongs to the RnfG family. In terms of assembly, the complex is composed of six subunits: RnfA, RnfB, RnfC, RnfD, RnfE and RnfG. Requires FMN as cofactor.

It localises to the cell inner membrane. Functionally, part of a membrane-bound complex that couples electron transfer with translocation of ions across the membrane. This Vibrio parahaemolyticus serotype O3:K6 (strain RIMD 2210633) protein is Ion-translocating oxidoreductase complex subunit G.